The chain runs to 212 residues: MGTNKPVVIGIAGGSGSGKTSVTKAIFDHFKGHSILILEQDYYYKDQSHLPMEERLKTNYDHPLAFDNDLLIDHLQQLLAYEQVEKPIYDYTLHTRSEKIIPVEPKDVIILEGILILEDPRLCELMDIKVFVDTDADLRILRRMQRDIEERGRTMDSVIDQYVNVVRPMHNQFIEPSKKFADIIIPEGGQNHVAIDIMVTKIATILEQKVNL.

13 to 20 (GGSGSGKT) contacts ATP.

Belongs to the uridine kinase family.

It is found in the cytoplasm. The catalysed reaction is uridine + ATP = UMP + ADP + H(+). The enzyme catalyses cytidine + ATP = CMP + ADP + H(+). It participates in pyrimidine metabolism; CTP biosynthesis via salvage pathway; CTP from cytidine: step 1/3. It functions in the pathway pyrimidine metabolism; UMP biosynthesis via salvage pathway; UMP from uridine: step 1/1. This Bacillus mycoides (strain KBAB4) (Bacillus weihenstephanensis) protein is Uridine kinase.